A 461-amino-acid chain; its full sequence is Tumor necrosis factor receptor superfamily member 1A (461 aa).

A signal peptide spans 1-29; it reads MGLSTVPGLLLPLVLRALLVDVYPAGVHG. Residues 30–210 are Extracellular-facing; sequence LVLHPGDREK…RNDFQDTGTT (181 aa). 4 TNFR-Cys repeats span residues 43–82, 83–125, 126–166, and 167–195; these read LCPQ…TDCR, ECDN…DTVC, GCRK…DTIC, and NCHS…NLCP. 7 disulfides stabilise this stretch: C44–C58, C59–C72, C62–C81, C84–C99, C102–C117, C105–C125, and C127–C143. An N-linked (GlcNAc...) asparagine glycan is attached at N54. N86 carries an N-linked (GlcNAc...) asparagine glycan. N145 and N151 each carry an N-linked (GlcNAc...) asparagine glycan. 5 disulfides stabilise this stretch: C146–C158, C149–C166, C168–C179, C182–C194, and C185–C190. The helical transmembrane segment at 211–233 threads the bilayer; that stretch reads VLLPLVIFFGLCLAFFLFVGLAC. The Cytoplasmic portion of the chain corresponds to 234–461; it reads RYQRWKPKLY…RLAPAPHLLR (228 aa). An N-SMase activation domain (NSD) region spans residues 340–350; sequence LPKWGGSAHSA. The region spanning 362–447 is the Death domain; sequence PATLYAVVDG…GCLEDIEEAL (86 aa).

In terms of assembly, binding of TNF to the extracellular domain leads to homotrimerization. The aggregated death domains provide a novel molecular interface that interacts specifically with the death domain of TRADD. Various TRADD-interacting proteins such as TRAFS, RIPK1 and possibly FADD, are recruited to the complex by their association with TRADD. This complex activates at least two distinct signaling cascades, apoptosis and NF-kappa-B signaling. Interacts with BAG4, BABAM2, FEM1B, GRB2, SQSTM1 and TRPC4AP. Interacts with DAB2IP. Interacts directly with NOL3 (via CARD domain); inhibits TNF-signaling pathway. Interacts with SH3RF2, TRADD and RIPK1. SH3RF2 facilitates the recruitment of RIPK1 and TRADD to TNFRSF1A in a TNF-alpha-dependent process. Interacts with PGLYRP1; this interaction is important for cell death induction. Interacts (via death domain) with MADD (via death domain).

It localises to the cell membrane. Its subcellular location is the golgi apparatus membrane. Functionally, receptor for TNFSF2/TNF-alpha and homotrimeric TNFSF1/lymphotoxin-alpha. The adapter molecule FADD recruits caspase-8 to the activated receptor. The resulting death-inducing signaling complex (DISC) performs caspase-8 proteolytic activation which initiates the subsequent cascade of caspases (aspartate-specific cysteine proteases) mediating apoptosis. The protein is Tumor necrosis factor receptor superfamily member 1A (TNFRSF1A) of Sus scrofa (Pig).